The sequence spans 58 residues: Metallothionein (58 aa).

Positions 1-29 (MPGPCCNDVCECAAGGCKTGCVCTSCRCS) are beta. Positions 5, 6, 10, 12, 17, 21, 23, 26, 28, 31, 34, 38, 40, 46, 50, 54, 56, and 57 each coordinate a divalent metal cation. Residues 30-58 (PCDKCTSGCKCPSKEECAKTCSKPCECCP) form an alpha region.

Its function is as follows. Metallothioneins have a high content of cysteine residues that bind various heavy metals. Class I MTS in crustacea are involved in the sequestration of elevated levels of heavy-metal ions. The polypeptide is Metallothionein (Astacus astacus (Noble crayfish)).